The sequence spans 44 residues: Protein PsbN (44 aa).

Residues 7 to 29 (FFTTFLGCLLLSITGYSIYVGFG) traverse the membrane as a helical segment.

It belongs to the PsbN family.

Its subcellular location is the plastid. It localises to the chloroplast thylakoid membrane. Functionally, may play a role in photosystem I and II biogenesis. In Pleurastrum terricola (Filamentous green alga), this protein is Protein PsbN.